A 381-amino-acid chain; its full sequence is MADPKFQFLPYIAHDQPDVYETPDAPESETSDFYDEEPANESIERLHISTKDSYNKFKGKYLTGNVDFSDRIGKKIRNGYDAVSGEWDLAGEGEKETPIQKCLRLQCEMNELMEEITASQADATKTKEEKASYEAVFDVVGTAKKVLESLKLEQAIGSETVAMGAETEAKKLLTKIEEYKKSVGADPAKTATELVYSSRIAELEHRLHELEVAVGAKPEKISRLAGSAGAGNLIEAVQSISAKAALLQPQQLDLIETRLGNLLLKMAAIDEKSAATGQDANREQKILELYEIAKTTEPIVQILPDMLNRMQTLESLHKYATNFSKLFAELETTQASILKGIASNKTLLTGVQEAFAQNLENVNKEVKKLDERMKTLQEKVK.

Positions 15–39 are disordered; it reads DQPDVYETPDAPESETSDFYDEEPA. The segment covering 24 to 39 has biased composition (acidic residues); that stretch reads DAPESETSDFYDEEPA. Coiled coils occupy residues 100 to 216 and 350 to 381; these read QKCL…AVGA and GVQEAFAQNLENVNKEVKKLDERMKTLQEKVK.

The protein belongs to the dynactin subunit 2 family. Subunit of dynactin, a multiprotein complex associated with dynein.

The protein resides in the cytoplasm. The protein localises to the cytoskeleton. It is found in the membrane. Its function is as follows. Modulates cytoplasmic dynein binding to an organelle, and plays a role in prometaphase chromosome alignment and spindle organization during mitosis. The sequence is that of Dynactin subunit 2 from Aedes aegypti (Yellowfever mosquito).